The chain runs to 150 residues: Protein-export protein SecB (150 aa).

Belongs to the SecB family. As to quaternary structure, homotetramer, a dimer of dimers. One homotetramer interacts with 1 SecA dimer.

Its subcellular location is the cytoplasm. In terms of biological role, one of the proteins required for the normal export of preproteins out of the cell cytoplasm. It is a molecular chaperone that binds to a subset of precursor proteins, maintaining them in a translocation-competent state. It also specifically binds to its receptor SecA. The sequence is that of Protein-export protein SecB from Acidovorax ebreus (strain TPSY) (Diaphorobacter sp. (strain TPSY)).